The primary structure comprises 178 residues: Inner membrane-spanning protein YciB (178 aa).

The next 5 helical transmembrane spans lie at 22-42 (IFWA…YSWY), 50-70 (MTLV…YFHN), 76-96 (WKVT…QWVM), 121-141 (IAWA…AFWL), and 149-169 (FKVF…GVYI).

The protein belongs to the YciB family.

The protein resides in the cell inner membrane. Functionally, plays a role in cell envelope biogenesis, maintenance of cell envelope integrity and membrane homeostasis. This is Inner membrane-spanning protein YciB from Cronobacter sakazakii (strain ATCC BAA-894) (Enterobacter sakazakii).